The following is a 255-amino-acid chain: Cathepsin G (255 aa).

The signal sequence occupies residues 1–18 (MQPLLLLLAFLLPTGAEA). The propeptide at 19-20 (GE) is activation peptide. The interval 21–25 (IIGGR) is important for antimicrobial activity. In terms of domain architecture, Peptidase S1 spans 21–243 (IIGGRESRPH…FLPWIRTTMR (223 aa)). An intrachain disulfide couples Cys49 to Cys65. His64 (charge relay system) is an active-site residue. Residue Asn71 is glycosylated (N-linked (GlcNAc...) (complex) asparagine; alternate). Asn71 carries N-linked (GlcNAc...) (paucimannose) asparagine; alternate glycosylation. The interval 97 to 111 (HPQYNQRTIQNDIML) is important for antimicrobial activity. Asp108 functions as the Charge relay system in the catalytic mechanism. 2 disulfides stabilise this stretch: Cys142/Cys207 and Cys172/Cys186. Catalysis depends on Ser201, which acts as the Charge relay system. The propeptide occupies 245 to 255 (FKLLDQMETPL).

Belongs to the peptidase S1 family. As to quaternary structure, (Microbial infection) Interacts with CASP4; the interaction is promoted by the Td92 surface protein of the periodontal pathogen T.denticola and leads to CASP4 activation. In terms of assembly, (Microbial infection) Interacts with M.tuberculosis protein Rv3364c. (Microbial infection) Interacts with S.aureus EapH1; EapH1 acts as a reversible inhibitor of CATG activity. Two C-terminal truncation variants have been identified, one which ends at Arg-243 and one which ends at Ser-244. Expressed in neutrophils (at protein level). Expressed in B cells.

It is found in the cell membrane. The protein localises to the cytoplasmic granule. It localises to the secreted. Its subcellular location is the cytoplasm. The protein resides in the cytosol. It is found in the lysosome. The protein localises to the nucleus. The catalysed reaction is Specificity similar to chymotrypsin C.. With respect to regulation, inhibited by soybean trypsin inhibitor, benzamidine, the synthetic peptide R13K, Z-Gly-Leu-Phe-CH2Cl, phenylmethylsulfonyl fluoride, 3,4-dichloroisocoumarin, DFP, SBTI and alpha-1-antitrypsin. Inhibited by LPS from P.aeruginosa but not by LPS from S.minnesota. Not inhibited by elastinal, CMK, TLCK, ETDA or leupeptin. (Microbial infection) Inhibited reversibly by S.aureus EapH1. Its activity is regulated as follows. (Microbial infection) Activity is induced by the Td92 surface protein of the periodontal pathogen T.denticola. In terms of biological role, serine protease with trypsin- and chymotrypsin-like specificity. Also displays antibacterial activity against Gram-negative and Gram-positive bacteria independent of its protease activity. Prefers Phe and Tyr residues in the P1 position of substrates but also cleaves efficiently after Trp and Leu. Shows a preference for negatively charged amino acids in the P2' position and for aliphatic amino acids both upstream and downstream of the cleavage site. Required for recruitment and activation of platelets which is mediated by the F2RL3/PAR4 platelet receptor. Binds reversibly to and stimulates B cells and CD4(+) and CD8(+) T cells. Also binds reversibly to natural killer (NK) cells and enhances NK cell cytotoxicity through its protease activity. Cleaves complement C3. Cleaves vimentin. Cleaves thrombin receptor F2R/PAR1 and acts as either an agonist or an inhibitor, depending on the F2R cleavage site. Cleavage of F2R at '41-Arg-|-Ser-42' results in receptor activation while cleavage at '55-Phe-|-Trp-56' results in inhibition of receptor activation. Cleaves the synovial mucin-type protein PRG4/lubricin. Cleaves and activates IL36G which promotes expression of chemokines CXCL1 and CXLC8 in keratinocytes. Cleaves IL33 into mature forms which have greater activity than the unprocessed form. Cleaves coagulation factor F8 to produce a partially activated form. Also cleaves and activates coagulation factor F10. Cleaves leukocyte cell surface protein SPN/CD43 to release its extracellular domain and trigger its intramembrane proteolysis by gamma-secretase, releasing the CD43 cytoplasmic tail chain (CD43-ct) which translocates to the nucleus. Cleaves CCL5/RANTES to produce RANTES(4-68) lacking the N-terminal three amino acids which exhibits reduced chemotactic and antiviral activities. During apoptosis, cleaves SMARCA2/BRM to produce a 160 kDa cleavage product which localizes to the cytosol. Cleaves myelin basic protein MBP in B cell lysosomes at '224-Phe-|-Lys-225' and '248-Phe-|-Ser-249', degrading the major immunogenic MBP epitope and preventing the activation of MBP-specific autoreactive T cells. Cleaves annexin ANXA1 and antimicrobial peptide CAMP to produce peptides which act on neutrophil N-formyl peptide receptors to enhance the release of CXCL2. Acts as a ligand for the N-formyl peptide receptor FPR1, enhancing phagocyte chemotaxis. Has antibacterial activity against the Gram-negative bacteria N.gonorrhoeae and P.aeruginosa. Likely to act against N.gonorrhoeae by interacting with N.gonorrhoeae penA/PBP2. Exhibits potent antimicrobial activity against the Gram-positive bacterium L.monocytogenes. Has antibacterial activity against the Gram-positive bacterium S.aureus and degrades S.aureus biofilms, allowing polymorphonuclear leukocytes to penetrate the biofilm and phagocytose bacteria. Has antibacterial activity against M.tuberculosis. Mediates CASP4 activation induced by the Td92 surface protein of the periodontal pathogen T.denticola, causing production and secretion of IL1A and leading to pyroptosis of gingival fibroblasts. Induces platelet aggregation which is strongly potentiated in the presence of ELANE. This chain is Cathepsin G (CTSG), found in Homo sapiens (Human).